Reading from the N-terminus, the 433-residue chain is Staphylopine synthase (433 aa).

NADP(+)-binding positions include 9 to 12 (TGPV), Arg33, 37 to 40 (SEKS), and Asp99. His216 (proton donor/acceptor) is an active-site residue.

Belongs to the staphylopine dehydrogenase family. As to quaternary structure, homodimer.

The enzyme catalyses staphylopine + NADP(+) + H2O = (2S)-2-amino-4-{[(1R)-1-carboxy-2-(1H-imidazol-4-yl)ethyl]amino}butanoate + pyruvate + NADPH + H(+). Its function is as follows. Catalyzes the NADPH-dependent reductive condensation of pyruvate to the intermediate formed by the adjacently encoded enzyme CntL, namely (2S)-2-amino-4-{[(1R)-1-carboxy-2-(1H-imidazol-4-yl)ethyl]amino}butanoate, leading to the production of staphylopine. This is the last step in the biosynthesis of the metallophore staphylopine, which is involved in the acquisition of nickel, cobalt, zinc, copper, and iron, and thus enables bacterial growth inside the host, where metal access is limited. Therefore, this enzyme probably contributes to staphylococcal virulence. Can use neither NADH nor alpha-ketoglutarate in place of NADPH and pyruvate, respectively. In Staphylococcus aureus (strain Mu50 / ATCC 700699), this protein is Staphylopine synthase.